Reading from the N-terminus, the 541-residue chain is Protein wntless homolog (541 aa).

The Cytoplasmic portion of the chain corresponds to 1 to 15 (MAGAIIENMGTKKLC). Residues 16–36 (IVGGILLVFQIIAFLVGGLIA) traverse the membrane as a helical segment. Residues 37–232 (PGPTTAVSYM…GIHQNGGFTK (196 aa)) lie on the Lumenal side of the membrane. The segment at 101–232 (MEMSPWFQFM…GIHQNGGFTK (132 aa)) is interaction with Wnt proteins. A helical membrane pass occupies residues 233-253 (VWFAMKTFLTPSIFIIMVWYW). Topologically, residues 254 to 268 (RRITMMSRPPVLLEK) are cytoplasmic. The chain crosses the membrane as a helical span at residues 269–289 (VIFALGISMTFINIPVEWFSI). Topologically, residues 290-303 (GFDWTWMLLFGDIR) are lumenal. A helical transmembrane segment spans residues 304 to 324 (QGIFYAMLLSFWIIFCGEHMM). At 325 to 331 (DQHERNH) the chain is on the cytoplasmic side. The chain crosses the membrane as a helical span at residues 332-352 (IAGYWKQVGPIAVGSFCLFIF). The Lumenal portion of the chain corresponds to 353 to 380 (DMCERGVQLTNPFYSIWTTDIGTELAMA). The helical transmembrane segment at 381–401 (FIIVAGICLCLYFLFLCFMVF) threads the bilayer. At 402-431 (QVFRNISGKQSSLPAMSKVRRLHYEGLIFR) the chain is on the cytoplasmic side. Residues 432 to 452 (FKFLMLITLACAAMTVIFFIV) form a helical membrane-spanning segment. The Lumenal segment spans residues 453-471 (SQVTEGHWKWGGVTVQVNS). The chain crosses the membrane as a helical span at residues 472 to 492 (AFFTGIYGMWNLYVFALMFLY). Residues 493 to 541 (APSHKNYGEDQSNGDLGVHSGEELQLTTTITHVDGPTEIYKLTRKEAQE) lie on the Cytoplasmic side of the membrane.

The protein belongs to the wntless family. As to quaternary structure, interacts with WNT3A. Interacts with WNT1, WNT3 and WNT5A.

The protein resides in the golgi apparatus membrane. It is found in the cytoplasmic vesicle membrane. Its subcellular location is the cell membrane. It localises to the endoplasmic reticulum membrane. The protein localises to the early endosome membrane. Its function is as follows. Regulates Wnt proteins sorting and secretion in a feedback regulatory mechanism. This reciprocal interaction plays a key role in the regulation of expression, subcellular location, binding and organelle-specific association of Wnt proteins. Also plays an important role in establishment of the anterior-posterior body axis formation during development. In Pongo abelii (Sumatran orangutan), this protein is Protein wntless homolog (WLS).